The following is a 304-amino-acid chain: Acetyl-coenzyme A carboxylase carboxyl transferase subunit beta (304 aa).

The region spanning 26 to 295 is the CoA carboxyltransferase N-terminal domain; that stretch reads VWTKCTSCEQ…PFVEPELVEN (270 aa). Zn(2+)-binding residues include Cys-30, Cys-33, Cys-49, and Cys-52. The C4-type zinc finger occupies 30-52; the sequence is CTSCEQVLYRDELRRHLEVCPKC. The tract at residues 281 to 304 is disordered; sequence SNKPSPFVEPELVENEEQSKSDNE.

This sequence belongs to the AccD/PCCB family. As to quaternary structure, acetyl-CoA carboxylase is a heterohexamer composed of biotin carboxyl carrier protein (AccB), biotin carboxylase (AccC) and two subunits each of ACCase subunit alpha (AccA) and ACCase subunit beta (AccD). Zn(2+) is required as a cofactor.

It localises to the cytoplasm. The enzyme catalyses N(6)-carboxybiotinyl-L-lysyl-[protein] + acetyl-CoA = N(6)-biotinyl-L-lysyl-[protein] + malonyl-CoA. It functions in the pathway lipid metabolism; malonyl-CoA biosynthesis; malonyl-CoA from acetyl-CoA: step 1/1. Its function is as follows. Component of the acetyl coenzyme A carboxylase (ACC) complex. Biotin carboxylase (BC) catalyzes the carboxylation of biotin on its carrier protein (BCCP) and then the CO(2) group is transferred by the transcarboxylase to acetyl-CoA to form malonyl-CoA. The protein is Acetyl-coenzyme A carboxylase carboxyl transferase subunit beta of Pasteurella multocida (strain Pm70).